Here is a 395-residue protein sequence, read N- to C-terminus: Xylose isomerase (395 aa).

Catalysis depends on residues His-54 and Glu-57. Residues 80–108 (AVPAGAGRDRHEGADGDDEPVHAPGCSRD) are disordered. Residues Glu-189, Glu-225, His-228, Asp-253, Asp-263, Asp-265, and Asp-295 each contribute to the Mg(2+) site.

Belongs to the xylose isomerase family. Homotetramer. It depends on Mg(2+) as a cofactor.

The protein resides in the cytoplasm. It carries out the reaction alpha-D-xylose = alpha-D-xylulofuranose. This is Xylose isomerase from Streptomyces lividans.